The chain runs to 542 residues: Cytochrome P450 27C1 (542 aa).

Residues 1 to 80 (MQTSAMALLA…LAAMPGPRTL (80 aa)) constitute a mitochondrion transit peptide. The disordered stretch occupies residues 20-75 (APERGGLLGGGAPRRPQPAGARLPAGARAEDKGAGRPGSPPGGGRAEGPRSLAAMP). The span at 32–46 (PRRPQPAGARLPAGA) shows a compositional bias: low complexity. Residue cysteine 488 participates in heme binding.

Belongs to the cytochrome P450 family. Heme is required as a cofactor. In terms of tissue distribution, widely expressed, with highest levels in the liver, kidney and pancreas. As to expression, expressed in the skin (at protein level).

The protein localises to the mitochondrion membrane. It carries out the reaction all-trans-retinol + 2 reduced [adrenodoxin] + O2 + 2 H(+) = all-trans-3,4-didehydroretinol + 2 oxidized [adrenodoxin] + 2 H2O. The enzyme catalyses all-trans-retinol + 2 reduced [adrenodoxin] + O2 + 2 H(+) = all-trans-4-hydroxyretinol + 2 oxidized [adrenodoxin] + H2O. It catalyses the reaction all-trans-retinol + 2 reduced [adrenodoxin] + O2 + 2 H(+) = all-trans-3-hydroxyretinol + 2 oxidized [adrenodoxin] + H2O. The protein operates within cofactor metabolism; retinol metabolism. In terms of biological role, a cytochrome P450 monooxygenase that catalyzes the 3,4 desaturation of all-trans-retinol (also called vitamin A1) to all-trans-3,4-didehydroretinol (also called vitamin A2) in the skin. Desaturates with lower efficiency all-trans retinal and all-trans retinoic acid. Forms minor amounts of 3-hydroxy and 4-hydroxy all-trans-retinol derivatives. Mechanistically, uses molecular oxygen inserting one oxygen atom into a substrate and reducing the second into a water molecule. Two electrons are provided by NADPH via a two-protein mitochondrial transfer system comprising flavoprotein FDXR (adrenodoxin/ferredoxin reductase) and nonheme iron-sulfur protein FDX1 or FDX2 (adrenodoxin/ferredoxin). In Homo sapiens (Human), this protein is Cytochrome P450 27C1.